The primary structure comprises 309 residues: MKHKITVGSRDSALALWQTRWVVEQLEKQNPDVTFEITTMKTKGDKMLDVALAKIGDKGLFTKELEVAMLQKEIDFAVHSLKDMPTALPEGLIIGAVCKRDNPGDALISKDGRKLDELPKGARIGTSSLRRCAQLLNYRPDFQLEALRGNLNTRMKKLVSEQLDGIILAAAGITRMGWEDMIAEIIPFQVCLPAVGQGAISVECREDDPEILNLLKGIEHTETKAATEAERSLLRYLEGGCQVPIGAHSEVKNNRLMLTAVVATLDGTKVIRAQGENEVNKAVELGIEVAEKLMAMGGKKILEEVRAGE.

C241 carries the post-translational modification S-(dipyrrolylmethanemethyl)cysteine.

The protein belongs to the HMBS family. In terms of assembly, monomer. The cofactor is dipyrromethane.

It catalyses the reaction 4 porphobilinogen + H2O = hydroxymethylbilane + 4 NH4(+). It functions in the pathway porphyrin-containing compound metabolism; protoporphyrin-IX biosynthesis; coproporphyrinogen-III from 5-aminolevulinate: step 2/4. Its function is as follows. Tetrapolymerization of the monopyrrole PBG into the hydroxymethylbilane pre-uroporphyrinogen in several discrete steps. The chain is Porphobilinogen deaminase from Desulforamulus reducens (strain ATCC BAA-1160 / DSM 100696 / MI-1) (Desulfotomaculum reducens).